A 321-amino-acid chain; its full sequence is Basic leucine zipper 34 (321 aa).

Residues 97-189 (TDDDNLHSNP…SGNRILDPKR (93 aa)) are disordered. 3 stretches are compositionally biased toward low complexity: residues 110–133 (NNKNNNVGPTGSSSNTSTPSNSFN), 145–155 (NMNNNINNNYN), and 172–182 (SNNNSGDSSGN). One can recognise a bZIP domain in the interval 186-238 (DPKRVKRILANRQSAQRSRVRKLQYISELERSVTSLQAEVSVLSPRVAFLDHQ). The tract at residues 188-207 (KRVKRILANRQSAQRSRVRK) is basic motif. Positions 214–235 (LERSVTSLQAEVSVLSPRVAFL) are leucine-zipper.

In terms of assembly, forms heterodimers with BZIP18, BZIP43 and VIP1/BZIP51. Expressed in vascular tissues of leaves, stems and siliques, anthers, filaments, tapetum, mature pollen grains, pistil vascular tissues and papillar cells, and funiculi.

It is found in the nucleus. Transcriptional activator involved in the sporophytic control of cell wall patterning and gametophytic control of pollen development. May play a role in the control of metabolic pathways regulating cellular transport and lipid metabolism. In Arabidopsis thaliana (Mouse-ear cress), this protein is Basic leucine zipper 34.